Consider the following 998-residue polypeptide: Protein Smaug (998 aa).

The segment covering 1 to 37 has biased composition (polar residues); the sequence is MKYATGTDNAMTSGISGQTNSSNSASNEMQPTTSTPT. Disordered regions lie at residues 1–45, 50–69, and 329–370; these read MKYA…EATS, TATY…QSQP, and LCPA…GSSS. A compositionally biased stretch (low complexity) spans 329-338; the sequence is LCPASGSRSS. Phosphoserine occurs at positions 564 and 575. Positions 583–763 are interaction with cup; the sequence is EFKPNYIKFH…KDLKFKLSKM (181 aa). Positions 600-654 constitute an SAM domain; it reads GIGLWLKSLRLHKYIELFKNMTYEEMLLITEDFLQSVGVTKGASHKLALCIDKLK. 2 disordered regions span residues 773 to 892 and 943 to 977; these read HVKP…MQQM and NGSN…QQPK. Composition is skewed to polar residues over residues 801 to 822 and 854 to 864; these read KSGS…NFSL and HQPQYKSSSYP. Position 971 is a phosphoserine (Ser971).

This sequence belongs to the SMAUG family. Interacts with oskar (osk). Binds to the 3'-UTR of nos. Interacts with cup, which in turn recruits eIF4-E, leading to an indirect interaction between smg and eIF4-E that prevents mRNA translation.

The protein localises to the cytoplasm. Functionally, translation regulator that binds to the 3'-UTR of specific mRNAs such as nanos (nos) and prevent their translation. Prevents translation of unlocalized nos in the bulk cytoplasm via the recruitment of cup. The sequence is that of Protein Smaug from Drosophila sechellia (Fruit fly).